The chain runs to 167 residues: Gem-associated protein 6 (167 aa).

The Sm domain occupies 7-74 (KGPLEWQDYI…VQTVETMNEG (68 aa)). The AD domain occupies 69 to 167 (ETMNEGDHRV…LIEGHLTASQ (99 aa)). Phosphoserine is present on residues Ser95 and Ser166.

In terms of assembly, part of the core SMN complex that contains SMN1, GEMIN2/SIP1, DDX20/GEMIN3, GEMIN4, GEMIN5, GEMIN6, GEMIN7, GEMIN8 and STRAP/UNRIP. Part of the SMN-Sm complex that contains SMN1, GEMIN2/SIP1, DDX20/GEMIN3, GEMIN4, GEMIN5, GEMIN6, GEMIN7, GEMIN8, STRAP/UNRIP and the Sm proteins SNRPB, SNRPD1, SNRPD2, SNRPD3, SNRPE, SNRPF and SNRPG. Interacts with GEMIN7; the interaction is direct. Interacts with GEMIN8; the interaction is direct. Interacts with SNRPB, SNRPD2, SNRPD3 and SNRPE; the interaction is direct.

Its subcellular location is the nucleus. The protein localises to the nucleoplasm. It localises to the gem. The protein resides in the cytoplasm. In terms of biological role, the SMN complex catalyzes the assembly of small nuclear ribonucleoproteins (snRNPs), the building blocks of the spliceosome, and thereby plays an important role in the splicing of cellular pre-mRNAs. Most spliceosomal snRNPs contain a common set of Sm proteins SNRPB, SNRPD1, SNRPD2, SNRPD3, SNRPE, SNRPF and SNRPG that assemble in a heptameric protein ring on the Sm site of the small nuclear RNA to form the core snRNP (Sm core). In the cytosol, the Sm proteins SNRPD1, SNRPD2, SNRPE, SNRPF and SNRPG are trapped in an inactive 6S pICln-Sm complex by the chaperone CLNS1A that controls the assembly of the core snRNP. To assemble core snRNPs, the SMN complex accepts the trapped 5Sm proteins from CLNS1A forming an intermediate. Binding of snRNA inside 5Sm triggers eviction of the SMN complex, thereby allowing binding of SNRPD3 and SNRPB to complete assembly of the core snRNP. This Homo sapiens (Human) protein is Gem-associated protein 6 (GEMIN6).